A 555-amino-acid polypeptide reads, in one-letter code: Glucose-6-phosphate isomerase (555 aa).

D-glucose 6-phosphate-binding positions include 169 to 170 (GS), 219 to 224 (SKTFTT), Gln364, Glu368, His399, and Lys521. The Proton donor role is filled by Glu368. Residues His399 and Lys521 contribute to the active site.

It belongs to the GPI family. In terms of assembly, homodimer.

The protein localises to the cytoplasm. It is found in the cytosol. It carries out the reaction alpha-D-glucose 6-phosphate = beta-D-fructose 6-phosphate. It functions in the pathway carbohydrate degradation; glycolysis; D-glyceraldehyde 3-phosphate and glycerone phosphate from D-glucose: step 2/4. In terms of biological role, in the cytoplasm, catalyzes the conversion of glucose-6-phosphate to fructose-6-phosphate, the second step in glycolysis, and the reverse reaction during gluconeogenesis. The protein is Glucose-6-phosphate isomerase (RAG2) of Kluyveromyces lactis (strain ATCC 8585 / CBS 2359 / DSM 70799 / NBRC 1267 / NRRL Y-1140 / WM37) (Yeast).